A 212-amino-acid chain; its full sequence is Thymidylate kinase (212 aa).

Position 11-18 (Gly11–Thr18) interacts with ATP.

Belongs to the thymidylate kinase family.

It carries out the reaction dTMP + ATP = dTDP + ADP. In terms of biological role, phosphorylation of dTMP to form dTDP in both de novo and salvage pathways of dTTP synthesis. The chain is Thymidylate kinase from Streptococcus pneumoniae (strain P1031).